We begin with the raw amino-acid sequence, 122 residues long: uncharacterized protein (122 aa).

The tract at residues 97–122 (TSRNGFSNPNKDGKKNDDDNNSSSKS) is disordered.

This is an uncharacterized protein from Mycoplasma genitalium (strain ATCC 33530 / DSM 19775 / NCTC 10195 / G37) (Mycoplasmoides genitalium).